The primary structure comprises 148 residues: UPF0134 protein MPN_204 (148 aa).

The protein belongs to the UPF0134 family.

The sequence is that of UPF0134 protein MPN_204 from Mycoplasma pneumoniae (strain ATCC 29342 / M129 / Subtype 1) (Mycoplasmoides pneumoniae).